Consider the following 372-residue polypeptide: Heat-inducible transcription repressor HrcA (372 aa).

Residues 296-331 (VSSGYGRSGEAGEPAGNDPVGEPETESETESQTNDM) are disordered.

Belongs to the HrcA family.

In terms of biological role, negative regulator of class I heat shock genes (grpE-dnaK-dnaJ and groELS operons). Prevents heat-shock induction of these operons. The chain is Heat-inducible transcription repressor HrcA from Bifidobacterium longum subsp. infantis (strain ATCC 15697 / DSM 20088 / JCM 1222 / NCTC 11817 / S12).